Here is a 193-residue protein sequence, read N- to C-terminus: Gas vesicle protein C (193 aa).

5 consecutive repeats follow at residues valine 19–phenylalanine 51, tyrosine 52–phenylalanine 84, histidine 85–phenylalanine 117, tyrosine 118–phenylalanine 150, and histidine 151–phenylalanine 183. The tract at residues valine 19–phenylalanine 183 is 5 X 33 AA tandem repeats.

It belongs to the gas vesicle GvpC family.

The protein resides in the gas vesicle. In terms of biological role, confers stability, involved in shaping gas vesicles (GV), hollow, gas-filled proteinaceous nanostructures. During planktonic growth they allow positioning of the organism at a favorable depth for light or nutrient acquisition. The ratio of GvpA:GvpC is estimated to be 25:1. GvpC strengthens the GV wall, probably by connecting several GvpA proteins in the same and/or adjacent ribs. Removal of GvpC by SDS reduces the critical collapse pressure (CCP) of stored gas vesicles from 0.23 Mpa to 0.08 MPa. Removal of GvpC by urea reduces CCP of freshly isolated GVs from 0.550 MPa to 0.190 MPa; addition of recombinant GvpC restores CCP to 0.508 MPa. As the turgor pressure in this species is usually 0.35 MPa (plus the water column pressure in its growth environment), this protein is essential for GV formation. The polypeptide is Gas vesicle protein C (Dolichospermum flosaquae (Anabaena flos-aquae)).